The sequence spans 290 residues: Agmatinase (290 aa).

Mn(2+)-binding residues include H112, D135, H137, D139, D216, and D218.

It belongs to the arginase family. Agmatinase subfamily. Mn(2+) serves as cofactor.

The enzyme catalyses agmatine + H2O = urea + putrescine. It participates in amine and polyamine biosynthesis; putrescine biosynthesis via agmatine pathway; putrescine from agmatine: step 1/1. In terms of biological role, catalyzes the formation of putrescine from agmatine. In Bacillus anthracis, this protein is Agmatinase (speB).